A 421-amino-acid chain; its full sequence is Mitochondrial tRNA-specific 2-thiouridylase 1 (421 aa).

ATP-binding positions include 10 to 17 and Met-36; that span reads ALSGGVDS. Positions 96–98 are interaction with target base in tRNA; the sequence is NPD. The active-site Nucleophile is the Cys-101. A disulfide bond links Cys-101 and Cys-222. Gly-126 lines the ATP pocket. An interaction with tRNA region spans residues 171–173; sequence KDQ. The active-site Cysteine persulfide intermediate is the Cys-222. Positions 334–335 are interaction with tRNA; sequence RH. Positions 395 to 421 are disordered; it reads KGQRRAGMATESPSDSPEDGPGLSPLL.

This sequence belongs to the MnmA/TRMU family. As to expression, ubiquitous. Abundantly expressed in tissues with high metabolic rates including heart, liver, kidney, and brain.

It localises to the mitochondrion. It catalyses the reaction 5-taurinomethyluridine(34) in tRNA + S-sulfanyl-L-cysteinyl-[protein] + AH2 + ATP = 5-taurinomethyl-2-thiouridine(34) in tRNA + L-cysteinyl-[protein] + A + AMP + diphosphate + H(+). In terms of biological role, catalyzes the 2-thiolation of uridine at the wobble position (U34) of mitochondrial tRNA(Lys), tRNA(Glu) and tRNA(Gln). Required for the formation of 5-taurinomethyl-2-thiouridine (tm5s2U) of mitochondrial tRNA(Lys), tRNA(Glu), and tRNA(Gln) at the wobble position. ATP is required to activate the C2 atom of the wobble base. This is Mitochondrial tRNA-specific 2-thiouridylase 1 (TRMU) from Homo sapiens (Human).